The chain runs to 927 residues: Tubulin monoglycylase TTLL3 (927 aa).

Residues 35-47 (RSQPSELRTNFSS) show a composition bias toward polar residues. 2 disordered regions span residues 35-113 (RSQP…PQPV) and 194-227 (HPPG…EENE). A compositionally biased stretch (acidic residues) spans 216-226 (DATEDEDEEEN). The 358-residue stretch at 345 to 702 (VLKLVVKLEE…DRRLDRSCDT (358 aa)) folds into the TTL domain. Residues Lys-476, 482-483 (RG), 514-517 (QKYI), 527-529 (KFD), and 571-572 (CN) contribute to the ATP site. Arg-482 contributes to the a protein binding site. The Mg(2+) site is built by Asp-649, Glu-662, and Asn-664. Glu-662 serves as a coordination point for ATP. Disordered regions lie at residues 735–799 (VPVG…SGKG) and 897–927 (EEGH…KTET). Positions 752–769 (LTQQGSGESKDSGSPTHR) are enriched in polar residues. The span at 776-788 (ARAESLEHTEKPE) shows a compositional bias: basic and acidic residues. The span at 916-927 (LSSTEPCSKTET) shows a compositional bias: polar residues.

It depends on Mg(2+) as a cofactor. Highly expressed in brain and testis. Expressed in heart, kidney, liver, lung, muscle, spleen, trachea and colon. Expressed in sperm flagellum. In the brain, specifically expressed in ependymal cilia.

It is found in the cytoplasm. Its subcellular location is the cytoskeleton. The protein localises to the cell projection. The protein resides in the cilium. It localises to the cilium axoneme. It is found in the flagellum axoneme. The enzyme catalyses L-glutamyl-[protein] + glycine + ATP = glycyl-L-glutamyl-[protein] + ADP + phosphate + H(+). Its function is as follows. Monoglycylase which modifies alpha- and beta-tubulin, adding a single glycine on the gamma-carboxyl groups of specific glutamate residues to generate monoglycine side chains within the C-terminal tail of tubulin. Not involved in elongation step of the polyglycylation reaction. Preferentially glycylates a beta-tail peptide over the alpha-tail, although shifts its preference toward alpha-tail as beta-tail glutamylation increases. Competes with polyglutamylases for modification site on beta-tubulin substrate, thereby creating an anticorrelation between glycylation and glutamylation reactions. Together with TTLL8, mediates microtubule glycylation of primary and motile cilia, which is essential for their stability and maintenance. Involved in microtubule glycylation of primary cilia in colon which controls cell proliferation of epithelial cells and plays an essential role in colon cancer development. Together with TTLL8, glycylates sperm flagella which regulates axonemal dynein motor activity, thereby controlling flagellar beat, directional sperm swimming and male fertility. In Mus musculus (Mouse), this protein is Tubulin monoglycylase TTLL3.